A 559-amino-acid polypeptide reads, in one-letter code: Phosphatase and actin regulator 3 (559 aa).

Residues 1–65 (MAASEDGSGC…GIRTPPVRRN (65 aa)) are disordered. The segment covering 15-24 (GRSQSDPSVL) has biased composition (polar residues). Residues 25-35 (TDSSATSSADA) are compositionally biased toward low complexity. T70 is subject to Phosphothreonine. A disordered region spans residues 82–342 (KKKNEKLKQT…VERGKEREEA (261 aa)). The stretch at 93 to 118 (SALEKKMAGRQGREELIKKGLLEMME) is one RPEL 1 repeat. Basic and acidic residues predominate over residues 95–113 (LEKKMAGRQGREELIKKGL). Polar residues predominate over residues 134 to 151 (SVQSEPPTPKSETLTSED). Positions 229–240 (PSPPLLPTPPPK) are enriched in pro residues. At S230 the chain carries Phosphoserine. T236 carries the post-translational modification Phosphothreonine. Polar residues-rich tracts occupy residues 248–262 (NVTG…SSMK) and 270–281 (GQLSTPTGSPHL). Residues 293-342 (VIEELHRALATKHRQDSFQGRESKGSPKKRLDVRLSRTSSVERGKEREEA) are compositionally biased toward basic and acidic residues. Residues 346–369 (DGALENKRTAAKESEENKENLIIN) are a coiled coil. 3 RPEL repeats span residues 401–426 (ELLA…PRRT), 439–464 (MKLS…KQRN), and 477–502 (QRLT…IRFS). Residues 438-518 (EMKLSKRLSQ…KAQDYDRRAD (81 aa)) are required for PP1CA binding and inhibition of PP1 activity. A coiled-coil region spans residues 450–486 (AVEELERRNILKQRNDQTEQEERREIKQRLTRKLNQR).

Belongs to the phosphatase and actin regulator family. In terms of assembly, binds actin and PPP1CA; thus inhibiting the protein phosphatase 1 (PP1) activity. Abundantly expressed in brain. Also found in several tumors such as lung carcinomas, nervous tumors and HL-60 leukemia cells. Isoform 3 is the major form in U-937, GOTO and HL-60 leukemia cells.

It localises to the nucleus matrix. The chain is Phosphatase and actin regulator 3 (PHACTR3) from Homo sapiens (Human).